We begin with the raw amino-acid sequence, 232 residues long: Thiamine import ATP-binding protein ThiQ (232 aa).

The ABC transporter domain maps to 2–230 (LKLTDITWLY…KASASALLGI (229 aa)). 32–39 (GPSGAGKS) is an ATP binding site.

Belongs to the ABC transporter superfamily. Thiamine importer (TC 3.A.1.19.1) family. The complex is composed of two ATP-binding proteins (ThiQ), two transmembrane proteins (ThiP) and a solute-binding protein (ThiB).

Its subcellular location is the cell inner membrane. The enzyme catalyses thiamine(out) + ATP + H2O = thiamine(in) + ADP + phosphate + H(+). Its function is as follows. Part of the ABC transporter complex ThiBPQ involved in thiamine import. Responsible for energy coupling to the transport system. This chain is Thiamine import ATP-binding protein ThiQ, found in Escherichia coli O6:H1 (strain CFT073 / ATCC 700928 / UPEC).